The chain runs to 843 residues: Speckle targeted PIP5K1A-regulated poly(A) polymerase (843 aa).

The Matrin-type zinc-finger motif lies at 25-55; the sequence is FRCLLCGVNIPNRPSLTDHLSGRRHVRLHEE. The RRM domain occupies 54-126; the sequence is EERDKRNQQQ…ALEEPQIKLS (73 aa). A compositionally biased stretch (basic residues) spans 134–146; that stretch reads PREKKEFQRKKGG. The tract at residues 134 to 157 is disordered; that stretch reads PREKKEFQRKKGGSPRTLQPPDPE. Ser215 contributes to the ATP binding site. Mg(2+) is bound by residues Asp226 and Asp228. UTP-binding residues include Asp226 and Asp228. Residues 241–255 show a composition bias toward basic and acidic residues; it reads VEGKAEKEIQNREES. Residues 241 to 292 are disordered; the sequence is VEGKAEKEIQNREESSTDMEVSMEDPETERKEEEMEIGNSKNDEDEDVTPGL. Asn354 contacts ATP. Residues Asn354, Arg376, Tyr398, and His516 each contribute to the UTP site. In terms of domain architecture, PAP-associated spans 456–516; it reads SLSSLLSEFF…NIQDPFELSH (61 aa). The KA1; binds the bulging loops of U6 snRNA but is dispensable for terminal uridylyltransferase activity stretch occupies residues 564–837; that stretch reads PPTERECVGR…YLPRMVAQIQ (274 aa). Residues 653-691 form a disordered region; it reads QNNTKEASKQKSIFKTEEGMTESARRKREMTEPCMSDMT. The segment covering 658–670 has biased composition (basic and acidic residues); sequence EASKQKSIFKTEE.

Belongs to the DNA polymerase type-B-like family. As to quaternary structure, associates with the cleavage and polyadenylation specificity factor (CPSF) complex. The cofactor is Mg(2+). It depends on Mn(2+) as a cofactor.

The protein localises to the nucleus. It is found in the nucleolus. Its subcellular location is the nucleus speckle. The enzyme catalyses RNA(n) + UTP = RNA(n)-3'-uridine ribonucleotide + diphosphate. The catalysed reaction is RNA(n) + ATP = RNA(n)-3'-adenine ribonucleotide + diphosphate. Its function is as follows. Poly(A) polymerase that creates the 3'-poly(A) tail of specific pre-mRNAs. In addition to polyadenylation, it is also required for the 3'-end cleavage of pre-mRNAs: binds to the 3'UTR of targeted pre-mRNAs and promotes the recruitment and assembly of the CPSF complex on the 3'UTR of pre-mRNAs. In addition to adenylyltransferase activity, also has uridylyltransferase activity. However, the ATP ratio is higher than UTP in cells, suggesting that it functions primarily as a poly(A) polymerase. The protein is Speckle targeted PIP5K1A-regulated poly(A) polymerase (tut1) of Xenopus tropicalis (Western clawed frog).